An 85-amino-acid polypeptide reads, in one-letter code: Large ribosomal subunit protein bL27 (85 aa).

The interval Met1–Met20 is disordered.

The protein belongs to the bacterial ribosomal protein bL27 family.

The sequence is that of Large ribosomal subunit protein bL27 from Psychrobacter arcticus (strain DSM 17307 / VKM B-2377 / 273-4).